The sequence spans 591 residues: Aspartate--tRNA(Asp/Asn) ligase (591 aa).

Glu-176 is a binding site for L-aspartate. The tract at residues 200–203 is aspartate; sequence QLFK. Arg-222 lines the L-aspartate pocket. Residues 222-224 and Gln-231 contribute to the ATP site; that span reads RDE. An L-aspartate-binding site is contributed by His-450. Glu-484 lines the ATP pocket. Arg-491 lines the L-aspartate pocket. Residue 536-539 coordinates ATP; that stretch reads GLDR.

This sequence belongs to the class-II aminoacyl-tRNA synthetase family. Type 1 subfamily. Homodimer.

It localises to the cytoplasm. It catalyses the reaction tRNA(Asx) + L-aspartate + ATP = L-aspartyl-tRNA(Asx) + AMP + diphosphate. Its function is as follows. Aspartyl-tRNA synthetase with relaxed tRNA specificity since it is able to aspartylate not only its cognate tRNA(Asp) but also tRNA(Asn). Reaction proceeds in two steps: L-aspartate is first activated by ATP to form Asp-AMP and then transferred to the acceptor end of tRNA(Asp/Asn). This is Aspartate--tRNA(Asp/Asn) ligase from Bacillus cereus (strain ATCC 14579 / DSM 31 / CCUG 7414 / JCM 2152 / NBRC 15305 / NCIMB 9373 / NCTC 2599 / NRRL B-3711).